Reading from the N-terminus, the 6907-residue chain is Fibrous sheath-interacting protein 2 (6907 aa).

The interval 273-292 (EERIEEQQHRNREESDRKKQ) is disordered. Ser-430 is modified (phosphoserine). Disordered stretches follow at residues 439–472 (SQAF…ESGP), 954–990 (FQKS…RPFP), 1545–1573 (VQED…TKEM), 3202–3257 (VSSD…FDQT), 5650–5672 (RTSS…EHHS), 5725–5781 (SAQS…KPGI), 5850–5880 (DKGN…EAPS), and 6852–6874 (GSAN…KQGS). Residues 445–460 (PSKEEKETNADWDGRP) show a composition bias toward basic and acidic residues. Polar residues predominate over residues 954–966 (FQKSRQPRISSPS). Composition is skewed to basic and acidic residues over residues 1545-1555 (VQEDNKEETKS) and 3213-3229 (SVED…RPDS). Over residues 5728-5741 (SVTTKKVSSSTNKN) the composition is skewed to low complexity. A coiled-coil region spans residues 5738 to 5766 (TNKNISAKEKEEEEREKEKVREEIKSEPS). Over residues 5743–5778 (SAKEKEEEEREKEKVREEIKSEPSKPDDPQNQRESK) the composition is skewed to basic and acidic residues.

As to quaternary structure, may interact with AKAP4. In terms of tissue distribution, predominantly expressed in testis.

In terms of biological role, plays a role in spermatogenesis. This is Fibrous sheath-interacting protein 2 (FSIP2) from Homo sapiens (Human).